A 457-amino-acid chain; its full sequence is Trigger factor (457 aa).

In terms of domain architecture, PPIase FKBP-type spans 162 to 243 (GDFVSIDLSA…VQTVKERELP (82 aa)). Positions 434–457 (AELFGSSEDETEADASDSAESEDK) are disordered. Residues 440–457 (SEDETEADASDSAESEDK) are compositionally biased toward acidic residues.

The protein belongs to the FKBP-type PPIase family. Tig subfamily.

It is found in the cytoplasm. The catalysed reaction is [protein]-peptidylproline (omega=180) = [protein]-peptidylproline (omega=0). Its function is as follows. Involved in protein export. Acts as a chaperone by maintaining the newly synthesized protein in an open conformation. Functions as a peptidyl-prolyl cis-trans isomerase. This is Trigger factor from Rhodococcus erythropolis (strain PR4 / NBRC 100887).